Here is a 182-residue protein sequence, read N- to C-terminus: Probable RNA 2'-phosphotransferase (182 aa).

This sequence belongs to the KptA/TPT1 family.

Functionally, removes the 2'-phosphate from RNA via an intermediate in which the phosphate is ADP-ribosylated by NAD followed by a presumed transesterification to release the RNA and generate ADP-ribose 1''-2''-cyclic phosphate (APPR&gt;P). May function as an ADP-ribosylase. The chain is Probable RNA 2'-phosphotransferase from Pseudomonas aeruginosa (strain UCBPP-PA14).